Consider the following 478-residue polypeptide: MSTGKVVKITQAVVDLKFEDGLPKIFNALKSKLKYKGKELVLEVSQHIGDNIVRCIAMDSTDGMSRGDEFVDTGAPISVPVGRSTLGRIFNVVGELIDECGPLKGKYDLEPIHRSPPSFTEQKIQEEVLVTGIKVIDLLAPYLKGGKIGLFGGAGVGKTVLIMELINNIAKAHKGFSVFAGVGERTREGNDLYNEMITSNVIDINEHEKSQAVLVYGQMNEPPGARARVALTALTMAEYFRDHENQDVLFFVDNIFRFTQAGSEISALLGRIPSAVGYQPTLATDMGAMQERIASTTAGSITSVQAIYVPADDLTDPAPATTFSHLDATTVLSRQIAEMGIYPAVDPLDSTSQSLSAEIIGEEHYNVASEVKRILQTYKSLQDIIAILGMDELSDEDKIIVDRARKIQKFLSQPFHVAEVFTGMSGKFVSLSDTISSFKGIIEGKYDHLPEAAFYMVGSISEAIEKAESIKAEVGAGH.

152–159 provides a ligand contact to ATP; it reads GGAGVGKT.

Belongs to the ATPase alpha/beta chains family. In terms of assembly, F-type ATPases have 2 components, CF(1) - the catalytic core - and CF(0) - the membrane proton channel. CF(1) has five subunits: alpha(3), beta(3), gamma(1), delta(1), epsilon(1). CF(0) has three main subunits: a(1), b(2) and c(9-12). The alpha and beta chains form an alternating ring which encloses part of the gamma chain. CF(1) is attached to CF(0) by a central stalk formed by the gamma and epsilon chains, while a peripheral stalk is formed by the delta and b chains.

It is found in the cell membrane. It catalyses the reaction ATP + H2O + 4 H(+)(in) = ADP + phosphate + 5 H(+)(out). Its function is as follows. Produces ATP from ADP in the presence of a proton gradient across the membrane. The catalytic sites are hosted primarily by the beta subunits. In Wolbachia pipientis subsp. Culex pipiens (strain wPip), this protein is ATP synthase subunit beta.